A 275-amino-acid polypeptide reads, in one-letter code: Lacto-N-neotetraose biosynthesis glycosyltransferase LgtB (275 aa).

The protein belongs to the glycosyltransferase 25 family.

It participates in glycan metabolism; lacto-N-neotetraose biosynthesis. It functions in the pathway bacterial outer membrane biogenesis; lipooligosaccharide biosynthesis. Adds the second galactose to the lacto-N-tetraose chain in lipooligosaccharide (LOS). The sequence is that of Lacto-N-neotetraose biosynthesis glycosyltransferase LgtB (lgtB) from Neisseria meningitidis serogroup B (strain ATCC BAA-335 / MC58).